Here is a 172-residue protein sequence, read N- to C-terminus: Putative phosphoesterase BCAH820_1309 (172 aa).

Residue H34 is the Proton donor of the active site. Short sequence motifs (HXTX) lie at residues 34–37 (HITL) and 115–118 (HLTI). H115 serves as the catalytic Proton acceptor.

The protein belongs to the 2H phosphoesterase superfamily. YjcG family.

The chain is Putative phosphoesterase BCAH820_1309 from Bacillus cereus (strain AH820).